A 575-amino-acid chain; its full sequence is Arginine--tRNA ligase (575 aa).

The short motif at 130–140 (ANPTGPMHVGH) is the 'HIGH' region element.

It belongs to the class-I aminoacyl-tRNA synthetase family. Monomer.

It is found in the cytoplasm. It catalyses the reaction tRNA(Arg) + L-arginine + ATP = L-arginyl-tRNA(Arg) + AMP + diphosphate. The chain is Arginine--tRNA ligase from Magnetococcus marinus (strain ATCC BAA-1437 / JCM 17883 / MC-1).